A 147-amino-acid polypeptide reads, in one-letter code: Hemoglobin subunit beta (147 aa).

V2 carries the N-acetylvaline modification. Residues H3–H147 enclose the Globin domain. Phosphothreonine is present on T13. S45 is subject to Phosphoserine. K60 carries the N6-acetyllysine modification. H64 serves as a coordination point for heme b. K83 is subject to N6-acetyllysine. H93 is a binding site for heme b. An S-nitrosocysteine modification is found at C94. K145 carries the post-translational modification N6-acetyllysine.

It belongs to the globin family. As to quaternary structure, heterotetramer of two alpha chains and two beta chains. In terms of tissue distribution, red blood cells.

Its function is as follows. Involved in oxygen transport from the lung to the various peripheral tissues. The polypeptide is Hemoglobin subunit beta (HBB) (Callimico goeldii (Goeldi's marmoset)).